The sequence spans 241 residues: Major prion protein (241 aa).

The N-terminal stretch at 1 to 15 (MLVLFVATWSDLGLC) is a signal peptide. The interval 16-31 (KKRPKPGGWNTGGSRY) is interaction with ADGRG6. Residues 16–223 (KKRPKPGGWN…ESQAYYQRGS (208 aa)) form an interaction with GRB2, ERI3 and SYN1 region. Residues 18-100 (RPKPGGWNTG…QWNKPSKPKT (83 aa)) form a disordered region. 5 consecutive repeat copies span residues 44 to 52 (PQGGGSWGQ), 53 to 60 (PHGGGWGQ), 61 to 68 (PHGGGWGQ), 69 to 76 (PHGGGWGQ), and 77 to 84 (PHGGGWGQ). Positions 44 to 84 (PQGGGSWGQPHGGGWGQPHGGGWGQPHGGGWGQPHGGGWGQ) are 5 X 8 AA tandem repeats of P-H-G-G-G-W-G-Q. Over residues 45 to 88 (QGGGSWGQPHGGGWGQPHGGGWGQPHGGGWGQPHGGGWGQGGGT) the composition is skewed to gly residues. Cu(2+) contacts are provided by H54, G55, G56, H62, G63, G64, H70, G71, G72, H78, G79, and G80. C172 and C207 are oxidised to a cystine. N-linked (GlcNAc...) asparagine glycosylation is found at N174 and N190. S223 carries the GPI-anchor amidated serine lipid modification. The propeptide at 224–241 (SMVLFSSPPVILLISFLI) is removed in mature form.

Belongs to the prion family. In terms of assembly, monomer and homodimer. Has a tendency to aggregate into amyloid fibrils containing a cross-beta spine, formed by a steric zipper of superposed beta-strands. Soluble oligomers may represent an intermediate stage on the path to fibril formation. Copper binding may promote oligomerization. Interacts with GRB2, APP, ERI3/PRNPIP and SYN1. Mislocalized cytosolically exposed PrP interacts with MGRN1; this interaction alters MGRN1 subcellular location and causes lysosomal enlargement. Interacts with APP. Interacts with KIAA1191. Interacts with ADGRG6.

The protein resides in the cell membrane. It localises to the golgi apparatus. Its primary physiological function is unclear. May play a role in neuronal development and synaptic plasticity. May be required for neuronal myelin sheath maintenance. May promote myelin homeostasis through acting as an agonist for ADGRG6 receptor. May play a role in iron uptake and iron homeostasis. Soluble oligomers are toxic to cultured neuroblastoma cells and induce apoptosis (in vitro). Association with GPC1 (via its heparan sulfate chains) targets PRNP to lipid rafts. Also provides Cu(2+) or Zn(2+) for the ascorbate-mediated GPC1 deaminase degradation of its heparan sulfate side chains. This chain is Major prion protein (PRNP), found in Plecturocebus moloch (Dusky titi monkey).